A 703-amino-acid polypeptide reads, in one-letter code: Probable boron transporter 2 (703 aa).

The Cytoplasmic segment spans residues 1-35; the sequence is MEETFVPFEGIKNDLKGRLMCYKQDWTGGIKAGFR. The chain crosses the membrane as a helical span at residues 36-56; sequence ILAPTTYIFFASAIPVISFGE. At 57-75 the chain is on the extracellular side; sequence QLERSTDGVLTAVQTLAST. A helical transmembrane segment spans residues 76 to 96; the sequence is AICGIIHSIIGGQPLLILGVA. The Cytoplasmic portion of the chain corresponds to 97–120; sequence EPTVIMYTFMFNFAKGRPELGRNL. A helical transmembrane segment spans residues 121–141; sequence FLAWSGWVCVWTSLILFVLAI. At 142–155 the chain is on the extracellular side; the sequence is CGACSFINRFTRVA. Residues 156-176 traverse the membrane as a helical segment; sequence GELFGLLIAMLFMQQAIKGLV. Residues 177–195 are Cytoplasmic-facing; sequence DEFRAPAREDLKLVEFLPS. A helical transmembrane segment spans residues 196–216; sequence WRFANGMFALVLSFGLLITAL. The Extracellular portion of the chain corresponds to 217–233; that stretch reads RSRKARSWRYGTGWLRS. The chain crosses the membrane as a helical span at residues 234–254; sequence LVADYGVPLMVLVWTGVSYIP. Residues 255–289 are Cytoplasmic-facing; that stretch reads TGDVPKGIPRRLFSPNPWSPGAYENWTVVKEMLQV. A helical transmembrane segment spans residues 290 to 310; that stretch reads PIVYIIGAFIPATMIAVLYYF. Topologically, residues 311–337 are extracellular; sequence DHSVASQLAQQKEFNLRKPSSYHYDLL. A helical transmembrane segment spans residues 338–358; that stretch reads LLGFLTLMCGLLGIPPSNGVI. Residues 359-480 are Cytoplasmic-facing; it reads PQSPMHTKSL…AVMVGGCVAA (122 aa). The chain crosses the membrane as a helical span at residues 481 to 501; sequence MPLLKMIPTSVLWGYFAFMAI. Residues 502 to 557 are Extracellular-facing; the sequence is ESLPGNQFWERILLLFTAPSRRFKVLEDNHATFVETVPFKTIAMFTIFQTTYLLTC. A helical transmembrane segment spans residues 558–578; it reads FGLTWIPIAGVMFPLLIMFLI. Residues 579-703 are Cytoplasmic-facing; the sequence is PVRQYILPRF…SPLNPSSSSK (125 aa). The tract at residues 678–703 is disordered; that stretch reads EMSPRLSGKGQNSPKPSPLNPSSSSK.

It belongs to the anion exchanger (TC 2.A.31.3) family.

The protein localises to the membrane. Probable boron transporter. Boron is essential for maintaining the integrity of plants cell walls. The protein is Probable boron transporter 2 (BOR2) of Arabidopsis thaliana (Mouse-ear cress).